The primary structure comprises 1094 residues: Probable arabinosyltransferase A (1094 aa).

Transmembrane regions (helical) follow at residues 12–34, 205–224, 247–269, 322–344, 356–375, 408–430, 451–470, 519–536, 543–565, 575–597, 604–626, 641–663, and 684–706; these read IARLAAVVSGIAGLLLCGIVPLL, AVMLLGVLAVLVAMVGLAAL, GFASRLADAAVIATLLLWHVIGA, VWMRLPATLAGIACWLIVSRFVL, SNRVAVFTAGAVFLSAWLPF, AAVAIIVATLTATLAPQGLIALA, GLLAPLAVLAAALSLITVVV, FAVLVLLFCLFGVLFVLL, GLASGPAWRLIGTTAVGLLLLTF, GAFAGLAGVLGAVTAFTFARIGL, TLYVTALLFVLAWATSGINGWFY, IASHPVTSMFLTLSILTGLLAAW, and ILASTPLLVVAVIMVAGEVGSMA.

It belongs to the emb family.

Its subcellular location is the cell membrane. Its function is as follows. Arabinosyl transferase responsible for the polymerization of arabinose into the arabinan of arabinogalactan. In Mycobacterium tuberculosis (strain CDC 1551 / Oshkosh), this protein is Probable arabinosyltransferase A (embA).